The sequence spans 161 residues: Phage-like element PBSX protein XkdI (161 aa).

The protein to B.subtilis YqbI.

This is Phage-like element PBSX protein XkdI (xkdI) from Bacillus subtilis (strain 168).